We begin with the raw amino-acid sequence, 759 residues long: MGSAKILSFTLLLFVGYTLVHGSTPKHYIVYMGDRSHPNSESVVRANHEILASVTGSLNDAKAAAIHHYSRSFQGFSAMITPEQAKKLADHNSVVSVFESKMNKLHTTHSWDFLGLDTVYKNNPSALDSASNVIVGVIDSGVWPESESFNDYGLGPVPEKFKGECVTGDNFTLANCNKKIIGARFYSKGLEAEIGPLENIVDSIFFRSPRDSDGHGTHTASTIAGSIVSNVSLFGMAKGTARGGAPSARLSIYKACWFGFCSDADVFAAMDDAIHDGVDILSLSLGPDPPQPLYFENAISVGAFHAFQKGILVSASAGNSVFPRTACNVAPWIFTVAASTVDREFRSDIYLGNSKVLKGLSLNPIKMEGSYGLIYGSAAAAAGDAALNASFCKEHTLDPTLIKGKIVICTVEKFTDNRREKAIIIKQGGGVGMILIDHNARDVGFQFVIPSTMIGQDAVEELQAYMKTEKNPTATIFPTLTLVGTKPAPESAAFSSVGPNIITPDIIKPDITGPGVNILAAWSPVATEATVEQKSVNYNIISGTSMSCPHISAISAIIKSHHPSWSPAAIMSAIMTSATVMDNTHSLIGRDPNGTQATPFDYGSGHVNPVASLNPGLVYDFSSQDVLNFLCSNGASPAQLKNLTGELTQCQKSPTASYNFNYPSIGVSNLNGSLSVYRTVTYYGQEPTEYFASVERPSGVIVRVTPAKLKFWKAGEKITFRIDFTPFKNSNGNFVFGALTWNNGKQRVRSPIGLNVLST.

A signal peptide spans 1–22 (MGSAKILSFTLLLFVGYTLVHG). The Inhibitor I9 domain maps to 28–105 (YIVYMGDRSH…SVFESKMNKL (78 aa)). Positions 110-613 (SWDFLGLDTV…SGHVNPVASL (504 aa)) constitute a Peptidase S8 domain. D139 serves as the catalytic Charge relay system. N-linked (GlcNAc...) asparagine glycosylation is present at N170. The active-site Charge relay system is the H215. Residues N230 and N388 are each glycosylated (N-linked (GlcNAc...) asparagine). The 73-residue stretch at 390-462 (SFCKEHTLDP…MIGQDAVEEL (73 aa)) folds into the PA domain. S545 acts as the Charge relay system in catalysis. N-linked (GlcNAc...) asparagine glycans are attached at residues N593, N642, and N671.

Belongs to the peptidase S8 family.

The protein resides in the secreted. Its subcellular location is the extracellular space. It is found in the apoplast. Required for arbuscular mycorrhiza (AM) development during AM symbiosis with AM fungi (e.g. Glomeromycota intraradices). This chain is Subtilisin-like serine-protease S, found in Lotus japonicus (Lotus corniculatus var. japonicus).